The following is a 403-amino-acid chain: Argininosuccinate synthase (403 aa).

10–18 (AYSGGVDTS) lines the ATP pocket. An L-citrulline-binding site is contributed by tyrosine 89. Glycine 119 lines the ATP pocket. Threonine 121, asparagine 125, and aspartate 126 together coordinate L-aspartate. Asparagine 125 lines the L-citrulline pocket. L-citrulline contacts are provided by arginine 129, serine 177, serine 186, glutamate 262, and tyrosine 274.

The protein belongs to the argininosuccinate synthase family. Type 1 subfamily. As to quaternary structure, homotetramer.

The protein resides in the cytoplasm. It catalyses the reaction L-citrulline + L-aspartate + ATP = 2-(N(omega)-L-arginino)succinate + AMP + diphosphate + H(+). The protein operates within amino-acid biosynthesis; L-arginine biosynthesis; L-arginine from L-ornithine and carbamoyl phosphate: step 2/3. The sequence is that of Argininosuccinate synthase from Synechococcus sp. (strain JA-3-3Ab) (Cyanobacteria bacterium Yellowstone A-Prime).